The following is a 237-amino-acid chain: Class B acid phosphatase (237 aa).

The first 23 residues, 1–23, serve as a signal peptide directing secretion; it reads MRKTPLALSAVFLLLSLNQSAFA. The Nucleophile role is filled by Asp-69. Residues Asp-69 and Asp-71 each contribute to the Mg(2+) site. Residue Asp-71 is the Proton donor of the active site. Residues 137 to 138 and Lys-177 contribute to the substrate site; that span reads TG. Mg(2+) is bound at residue Asp-192.

It belongs to the class B bacterial acid phosphatase family. As to quaternary structure, homotetramer. The cofactor is Mg(2+).

Its subcellular location is the periplasm. It catalyses the reaction a phosphate monoester + H2O = an alcohol + phosphate. In terms of biological role, dephosphorylates several organic phosphate monoesters. Also has a phosphotransferase activity catalyzing the transfer of low-energy phosphate groups from organic phosphate monoesters to free hydroxyl groups of various organic compounds. This is Class B acid phosphatase from Rahnella sp. (strain Y9602).